Here is a 385-residue protein sequence, read N- to C-terminus: NADH-quinone oxidoreductase subunit D 2 (385 aa).

This sequence belongs to the complex I 49 kDa subunit family. NDH-1 is composed of 14 different subunits. Subunits NuoB, C, D, E, F, and G constitute the peripheral sector of the complex.

The protein localises to the cell membrane. The catalysed reaction is a quinone + NADH + 5 H(+)(in) = a quinol + NAD(+) + 4 H(+)(out). Its function is as follows. NDH-1 shuttles electrons from NADH, via FMN and iron-sulfur (Fe-S) centers, to quinones in the respiratory chain. The immediate electron acceptor for the enzyme in this species is believed to be a menaquinone. Couples the redox reaction to proton translocation (for every two electrons transferred, four hydrogen ions are translocated across the cytoplasmic membrane), and thus conserves the redox energy in a proton gradient. This is NADH-quinone oxidoreductase subunit D 2 from Salinispora arenicola (strain CNS-205).